Consider the following 117-residue polypeptide: Acidic phospholipase A2 PA-1G (117 aa).

7 cysteine pairs are disulfide-bonded: Cys-11–Cys-71, Cys-27–Cys-117, Cys-29–Cys-45, Cys-44–Cys-98, Cys-51–Cys-91, Cys-60–Cys-84, and Cys-78–Cys-89. 3 residues coordinate Ca(2+): Tyr-28, Gly-30, and Gly-32. The active site involves His-48. Asp-49 serves as a coordination point for Ca(2+). Asp-92 is a catalytic residue.

This sequence belongs to the phospholipase A2 family. Group I subfamily. D49 sub-subfamily. It depends on Ca(2+) as a cofactor. Expressed by the venom gland.

It localises to the secreted. The catalysed reaction is a 1,2-diacyl-sn-glycero-3-phosphocholine + H2O = a 1-acyl-sn-glycero-3-phosphocholine + a fatty acid + H(+). PLA2 catalyzes the calcium-dependent hydrolysis of the 2-acyl groups in 3-sn-phosphoglycerides. The chain is Acidic phospholipase A2 PA-1G from Pseudechis australis (Mulga snake).